The sequence spans 201 residues: Molybdenum cofactor guanylyltransferase (201 aa).

Residues 15–17, lysine 28, aspartate 74, and aspartate 104 each bind GTP; that span reads LAG. Aspartate 104 contacts Mg(2+).

This sequence belongs to the MobA family. Monomer. Mg(2+) serves as cofactor.

The protein localises to the cytoplasm. It carries out the reaction Mo-molybdopterin + GTP + H(+) = Mo-molybdopterin guanine dinucleotide + diphosphate. Its function is as follows. Transfers a GMP moiety from GTP to Mo-molybdopterin (Mo-MPT) cofactor (Moco or molybdenum cofactor) to form Mo-molybdopterin guanine dinucleotide (Mo-MGD) cofactor. The polypeptide is Molybdenum cofactor guanylyltransferase (Pseudomonas syringae pv. syringae (strain B728a)).